The chain runs to 362 residues: DNA polymerase IV (362 aa).

Positions 6–187 (IIHVDMDAFY…LPVSSFHGVG (182 aa)) constitute a UmuC domain. Residues Asp-10 and Asp-105 each contribute to the Mg(2+) site. Glu-106 is a catalytic residue.

The protein belongs to the DNA polymerase type-Y family. Monomer. The cofactor is Mg(2+).

It is found in the cytoplasm. The enzyme catalyses DNA(n) + a 2'-deoxyribonucleoside 5'-triphosphate = DNA(n+1) + diphosphate. In terms of biological role, poorly processive, error-prone DNA polymerase involved in untargeted mutagenesis. Copies undamaged DNA at stalled replication forks, which arise in vivo from mismatched or misaligned primer ends. These misaligned primers can be extended by PolIV. Exhibits no 3'-5' exonuclease (proofreading) activity. May be involved in translesional synthesis, in conjunction with the beta clamp from PolIII. The protein is DNA polymerase IV of Leptospira interrogans serogroup Icterohaemorrhagiae serovar copenhageni (strain Fiocruz L1-130).